Here is a 202-residue protein sequence, read N- to C-terminus: Translation initiation factor 2 subunit beta (202 aa).

A TRAM domain is found at 145–202 (AIEEGGTYELRIDAVGSKGDGIAKIDKYTVFVPGATKGDVVKVKIKKISGNLAFSERA).

This sequence belongs to the eIF-2-beta/eIF-5 family. As to quaternary structure, heterotrimer composed of an alpha, a beta and a gamma chain.

Its function is as follows. eIF-2 functions in the early steps of protein synthesis by forming a ternary complex with GTP and initiator tRNA. This is Translation initiation factor 2 subunit beta (eif2b) from Methanosarcina mazei (strain ATCC BAA-159 / DSM 3647 / Goe1 / Go1 / JCM 11833 / OCM 88) (Methanosarcina frisia).